Consider the following 430-residue polypeptide: UDP-N-acetylglucosamine 1-carboxyvinyltransferase (430 aa).

Position 22 to 23 (22 to 23 (KN)) interacts with phosphoenolpyruvate. UDP-N-acetyl-alpha-D-glucosamine is bound at residue R102. C126 functions as the Proton donor in the catalytic mechanism. A 2-(S-cysteinyl)pyruvic acid O-phosphothioketal modification is found at C126. UDP-N-acetyl-alpha-D-glucosamine-binding positions include 131 to 135 (RPVDL), 172 to 175 (KVSV), D317, and I339.

It belongs to the EPSP synthase family. MurA subfamily.

It localises to the cytoplasm. It catalyses the reaction phosphoenolpyruvate + UDP-N-acetyl-alpha-D-glucosamine = UDP-N-acetyl-3-O-(1-carboxyvinyl)-alpha-D-glucosamine + phosphate. It participates in cell wall biogenesis; peptidoglycan biosynthesis. Its function is as follows. Cell wall formation. Adds enolpyruvyl to UDP-N-acetylglucosamine. The chain is UDP-N-acetylglucosamine 1-carboxyvinyltransferase from Sinorhizobium medicae (strain WSM419) (Ensifer medicae).